Reading from the N-terminus, the 419-residue chain is MESSLYETLKVTAQRAQRSTMALAQVPSGIKNKALRAMARSLRTAHSEILESNTTDLEFGRQMGLSETLLDRLKLTPQRLEGMALSLEQIAALKDPVGEIVGGWRHPEGLEIVRVRVPLGLIGIIYEARPNVTADAIGLCLKSGNGVLLKGGKEAENSNQAISSVLKAAAYEQGIPEGCIEQLPGERAVVEALIRLNPYLALVIPRGGHSLIDFVVRNATVPVLETGVGNCHIYVAASADLEMARRIVINAKVQRPSVCNAAEKLLVHRDTVVTHLAPLLEDLHAHGIEVRGCPRTVAFDPKVKSAGEEDWGKEYLDKIIAIKVVDSTREAIDWINHYGTRHSEAIVTANYEEARRFTAAIDAAAVYVNASTRFTDGGEFGFGAEIGISTQKLHARGPVGLVELTTTKYVVSGSGQIRP.

Belongs to the gamma-glutamyl phosphate reductase family.

The protein localises to the cytoplasm. The enzyme catalyses L-glutamate 5-semialdehyde + phosphate + NADP(+) = L-glutamyl 5-phosphate + NADPH + H(+). It participates in amino-acid biosynthesis; L-proline biosynthesis; L-glutamate 5-semialdehyde from L-glutamate: step 2/2. Catalyzes the NADPH-dependent reduction of L-glutamate 5-phosphate into L-glutamate 5-semialdehyde and phosphate. The product spontaneously undergoes cyclization to form 1-pyrroline-5-carboxylate. This is Gamma-glutamyl phosphate reductase from Gloeobacter violaceus (strain ATCC 29082 / PCC 7421).